Here is a 299-residue protein sequence, read N- to C-terminus: MAELGLNEHHQNEVINYMRFARSKRGLRLKTVDSCFQDLKDSRLVEETFTIDEVSEVLNGLQAVVHSEVESELINTAYTNVLLLRQLFSQAEKWYLKLQTDISELENRELLEQVAEFEKAEFVSSSKKPIIDITKPKLVPINEGGTTELLNKEILRLQQENEKLKSRLKTIEIQAVNALDEKSKLERVLQDLQLDQENQQDLLKAQDLDDLENTVATLRSEFQKTLNDKTENQKSLEENLAAAKHDLLRVQEQLSMAEKELEKKFQQTAAYRNMKEILTKKNDQIKDLRKRLAKYESED.

A coiled-coil region spans residues 96 to 299 (LKLQTDISEL…KRLAKYESED (204 aa)). The segment at 145 to 299 (GTTELLNKEI…KRLAKYESED (155 aa)) is interaction with BSS9.

It belongs to the LZTFL1 family. As to quaternary structure, self-associates. Interacts with BBS9; the interaction mediates the association of LZTL1 with the BBsome complex and regulates BBSome ciliary trafficking. In terms of tissue distribution, highly expressed in testis. Expressed in brain, cerebellum, eye, heart, kidney, liver, lung and trachea. In small intestine, graded expression along the crypt-villus axis with high levels in the villus apex and lower levels in the crypt stem cells (at protein level). Not expressed in skeletal muscle and white adipose tissue.

The protein resides in the cytoplasm. Functionally, regulates ciliary localization of the BBSome complex. Together with the BBSome complex, controls SMO ciliary trafficking and contributes to the sonic hedgehog (SHH) pathway regulation. May play a role in neurite outgrowth. May have tumor suppressor function. The sequence is that of Leucine zipper transcription factor-like protein 1 (Lztfl1) from Mus musculus (Mouse).